The following is a 174-amino-acid chain: Large ribosomal subunit protein uL10 (174 aa).

The protein belongs to the universal ribosomal protein uL10 family. As to quaternary structure, part of the ribosomal stalk of the 50S ribosomal subunit. The N-terminus interacts with L11 and the large rRNA to form the base of the stalk. The C-terminus forms an elongated spine to which L12 dimers bind in a sequential fashion forming a multimeric L10(L12)X complex.

In terms of biological role, forms part of the ribosomal stalk, playing a central role in the interaction of the ribosome with GTP-bound translation factors. The sequence is that of Large ribosomal subunit protein uL10 from Methylibium petroleiphilum (strain ATCC BAA-1232 / LMG 22953 / PM1).